Here is a 456-residue protein sequence, read N- to C-terminus: Phospholipase A1 member A (456 aa).

Positions 1–24 (MCPGLWGTCFWLWGSLLWLSIGRS) are cleaved as a signal peptide. Ser-166 (nucleophile) is an active-site residue. Catalysis depends on Asp-190, which acts as the Charge relay system. Cys-245 and Cys-258 are joined by a disulfide. His-260 (charge relay system) is an active-site residue. 2 cysteine pairs are disulfide-bonded: Cys-282-Cys-293 and Cys-296-Cys-304. Asn-365 carries N-linked (GlcNAc...) asparagine glycosylation.

This sequence belongs to the AB hydrolase superfamily. Lipase family.

It is found in the secreted. It catalyses the reaction a 1,2-diacyl-sn-glycero-3-phospho-L-serine + H2O = a 2-acyl-sn-glycero-3-phospho-L-serine + a fatty acid + H(+). The catalysed reaction is 1,2-di-(9Z)-octadecenoyl-sn-glycero-3-phospho-L-serine + H2O = 2-(9Z-octadecenoyl)-sn-glycero-3-phospho-L-serine + (9Z)-octadecenoate + H(+). The enzyme catalyses 1-hexadecanoyl-2-(5Z,8Z,11Z,14Z-eicosatetraenoyl)-sn-glycero-3-phospho-L-serine + H2O = 2-(5Z,8Z,11Z,14Z)-eicosatetraenoyl-sn-glycero-3-phospho-L-serine + hexadecanoate + H(+). It carries out the reaction a 1-acyl-sn-glycero-3-phospho-L-serine + H2O = sn-glycero-3-phospho-L-serine + a fatty acid + H(+). It catalyses the reaction 1-(9Z-octadecenoyl)-sn-glycero-3-phospho-L-serine + H2O = sn-glycero-3-phospho-L-serine + (9Z)-octadecenoate + H(+). Hydrolyzes the ester bond of the acyl group attached at the sn-1 position of phosphatidylserines (phospholipase A1 activity) and 1-acyl-2-lysophosphatidylserines (lysophospholipase activity) in the pathway of phosphatidylserines acyl chain remodeling. Cleaves phosphatidylserines exposed on the outer leaflet of the plasma membrane of apoptotic cells producing 2-acyl-1-lysophosphatidylserines, which in turn enhance mast cell activation and histamine production. Has no activity toward other glycerophospholipids including phosphatidylcholines, phosphatidylethanolamines, phosphatidic acids or phosphatidylinositols, or glycerolipids such as triolein. This Rattus norvegicus (Rat) protein is Phospholipase A1 member A.